The following is a 112-amino-acid chain: Large ribosomal subunit protein eL33y (112 aa).

The protein belongs to the eukaryotic ribosomal protein eL33 family.

The sequence is that of Large ribosomal subunit protein eL33y (RPL35AC) from Arabidopsis thaliana (Mouse-ear cress).